Consider the following 370-residue polypeptide: Glutamate 5-kinase (370 aa).

Position 17 (Lys17) interacts with ATP. Positions 56, 143, and 155 each coordinate substrate. 175–176 (SD) is a binding site for ATP. A PUA domain is found at 280 to 357 (RGTIRVDAGA…AEIVAILGYS (78 aa)).

This sequence belongs to the glutamate 5-kinase family.

It is found in the cytoplasm. The catalysed reaction is L-glutamate + ATP = L-glutamyl 5-phosphate + ADP. The protein operates within amino-acid biosynthesis; L-proline biosynthesis; L-glutamate 5-semialdehyde from L-glutamate: step 1/2. Catalyzes the transfer of a phosphate group to glutamate to form L-glutamate 5-phosphate. This chain is Glutamate 5-kinase, found in Cereibacter sphaeroides (strain ATCC 17023 / DSM 158 / JCM 6121 / CCUG 31486 / LMG 2827 / NBRC 12203 / NCIMB 8253 / ATH 2.4.1.) (Rhodobacter sphaeroides).